The following is a 32-amino-acid chain: uncharacterized protein (32 aa).

This is an uncharacterized protein from Haemophilus influenzae (strain ATCC 51907 / DSM 11121 / KW20 / Rd).